The sequence spans 485 residues: uncharacterized protein (485 aa).

Helical transmembrane passes span 79 to 99 (LVTL…LIFA), 117 to 137 (VFAL…FLVF), 139 to 159 (FFSG…LADL), 170 to 190 (VIYF…SGFI), 199 to 219 (WEFW…FLLL), 275 to 295 (ILIC…LVLI), 313 to 333 (GLMY…AMPI), 355 to 375 (LPMG…FGWT), 380 to 400 (IFWF…IMTS), 421 to 441 (GVKI…ESLF), and 448 to 468 (WGCT…PILF).

This sequence belongs to the major facilitator superfamily. CAR1 family.

Its subcellular location is the golgi apparatus. It is found in the membrane. This is an uncharacterized protein from Schizosaccharomyces pombe (strain 972 / ATCC 24843) (Fission yeast).